Reading from the N-terminus, the 352-residue chain is Ion-translocating oxidoreductase complex subunit D (352 aa).

4 consecutive transmembrane segments (helical) span residues 20-40 (IMLL…WFFG), 42-62 (GTLV…ALVL), 89-109 (IPPL…VIIA), and 123-143 (PAMI…TSWL). Thr-187 is subject to FMN phosphoryl threonine. The next 5 helical transmembrane spans lie at 214 to 234 (ILAG…GVWL), 242 to 262 (WHIP…GWLF), 267 to 287 (LAAP…FFIL), 301 to 321 (LIFG…GGYP), and 322 to 342 (DGVA…DYYT).

Belongs to the NqrB/RnfD family. In terms of assembly, the complex is composed of six subunits: RsxA, RsxB, RsxC, RsxD, RsxE and RsxG. Requires FMN as cofactor.

It is found in the cell inner membrane. Part of a membrane-bound complex that couples electron transfer with translocation of ions across the membrane. Required to maintain the reduced state of SoxR. The chain is Ion-translocating oxidoreductase complex subunit D from Escherichia coli O81 (strain ED1a).